We begin with the raw amino-acid sequence, 757 residues long: Zinc finger CCCH domain-containing protein 5 (757 aa).

Positions 1 to 127 (MEQANEKEEE…REEEERRWKD (127 aa)) are disordered. Basic and acidic residues predominate over residues 13–35 (HEEAAGEKESFEESKEKAAEMSR). Residues 36–50 (KEKRKAMKKLKRKQV) are compositionally biased toward basic residues. The segment covering 51-127 (RKEIAAKERE…REEEERRWKD (77 aa)) has biased composition (basic and acidic residues). The C3H1-type 1 zinc finger occupies 240–268 (EQDKAHCPFHLKTGACRFGQRCSRVHFYP). Residues 295–372 (YTDEEAELCY…KQVNCEFVNI (78 aa)) form the RRM domain. The C3H1-type 2 zinc finger occupies 374–404 (RWKVAICGEYMKSRLKTCSRGSACNFIHCFR). The tract at residues 441 to 757 (HESSGSLNDS…EEEIERWRPV (317 aa)) is disordered. The span at 444–455 (SGSLNDSISDLS) shows a compositional bias: polar residues. The segment covering 487 to 546 (YHGDTQDSTREDKLRRHAENCHDGDDSPSRDGSLEREMYKERRYAKDTLHRDSRWSEHSP) has biased composition (basic and acidic residues). 2 stretches are compositionally biased toward basic residues: residues 547 to 557 (GHRVGRKRIHG) and 600 to 609 (KTHRSSRKHS). Basic and acidic residues-rich tracts occupy residues 610-634 (REGS…DKSH), 644-672 (RSSS…KRSV), and 681-721 (SDKD…ETHK). Residues 722 to 733 (ERRHRHRKRRRT) show a composition bias toward basic residues.

The polypeptide is Zinc finger CCCH domain-containing protein 5 (Arabidopsis thaliana (Mouse-ear cress)).